A 147-amino-acid chain; its full sequence is Cell division protein SepF 1 (147 aa).

The protein belongs to the SepF family. In terms of assembly, homodimer. Interacts with FtsZ.

The protein localises to the cytoplasm. Cell division protein that is part of the divisome complex and is recruited early to the Z-ring. Probably stimulates Z-ring formation, perhaps through the cross-linking of FtsZ protofilaments. Its function overlaps with FtsA. The chain is Cell division protein SepF 1 from Desulforamulus reducens (strain ATCC BAA-1160 / DSM 100696 / MI-1) (Desulfotomaculum reducens).